The chain runs to 201 residues: Flavin prenyltransferase UbiX (201 aa).

Residues 23-25, serine 49, 103-106, and arginine 138 each bind FMN; these read GAS and SIKT. 2 residues coordinate dimethylallyl phosphate: tyrosine 168 and lysine 184.

This sequence belongs to the UbiX/PAD1 family.

The catalysed reaction is dimethylallyl phosphate + FMNH2 = prenylated FMNH2 + phosphate. In terms of biological role, flavin prenyltransferase that catalyzes the synthesis of the prenylated FMN cofactor (prenyl-FMN) for 4-hydroxy-3-polyprenylbenzoic acid decarboxylase UbiD. The prenyltransferase is metal-independent and links a dimethylallyl moiety from dimethylallyl monophosphate (DMAP) to the flavin N5 and C6 atoms of FMN. This is Flavin prenyltransferase UbiX from Saccharolobus solfataricus (strain ATCC 35092 / DSM 1617 / JCM 11322 / P2) (Sulfolobus solfataricus).